Here is a 392-residue protein sequence, read N- to C-terminus: MTLLGTALRPAATRVMLLGAGELGKEVAIECQRLGIEVIAVDRYPDAPAMHVAHRSHVINMLDGEALRHVITEEKPHYIVPEIEAIATDTLRELEGEGLNVVPCARATQLTMNREGIRRLAAEELGLPTSTYRFADSEASFHDAVAAVGFPCIVKPVMSSSGKGQSFIHSAEQLAQAWEYAQQGGRAGAGRVIVEGVVKFDFEITLLTVSAVDGVHFCAPVGHRQQDGDYRESWQPQQMSELALKRAQEIARHVVLALGGHGLFGVELFVCGDEVIFSEVSPRPHDTGMVTLISQDLSEFALHVRAFLGMPVGAIRQYGPAASAVILPQLTSQNVTFDNVHAAVGAGVQVRLFGKPEIDGSRRLGVALATGENVEEAVIRAKKAASRVTVKG.

N(1)-(5-phospho-beta-D-ribosyl)glycinamide contacts are provided by residues 22–23 (EL) and E82. ATP-binding positions include R114, K155, 160–165 (SSGKGQ), 195–198 (EGVV), and E203. Residues 119–308 (RLAAEELGLP…EFALHVRAFL (190 aa)) form the ATP-grasp domain. Residues E267 and E279 each contribute to the Mg(2+) site. Residues D286, K355, and 362–363 (RR) each bind N(1)-(5-phospho-beta-D-ribosyl)glycinamide.

Belongs to the PurK/PurT family. As to quaternary structure, homodimer.

The catalysed reaction is N(1)-(5-phospho-beta-D-ribosyl)glycinamide + formate + ATP = N(2)-formyl-N(1)-(5-phospho-beta-D-ribosyl)glycinamide + ADP + phosphate + H(+). It functions in the pathway purine metabolism; IMP biosynthesis via de novo pathway; N(2)-formyl-N(1)-(5-phospho-D-ribosyl)glycinamide from N(1)-(5-phospho-D-ribosyl)glycinamide (formate route): step 1/1. In terms of biological role, involved in the de novo purine biosynthesis. Catalyzes the transfer of formate to 5-phospho-ribosyl-glycinamide (GAR), producing 5-phospho-ribosyl-N-formylglycinamide (FGAR). Formate is provided by PurU via hydrolysis of 10-formyl-tetrahydrofolate. The polypeptide is Formate-dependent phosphoribosylglycinamide formyltransferase (Salmonella paratyphi B (strain ATCC BAA-1250 / SPB7)).